The primary structure comprises 247 residues: MAGHSKWANTKHRKAAQDSKRGKIFTKIIRELVTAARLGGGDPGSNPRLRAAIDKALSNNMTRDTLNRAIARGVGGDDDTNMETIIYEGYGPGGTAVMVECLSDNRNRTVSEVRHAFTKTGGNLGTDGSVSYLFTKKGVISYAPGLDEDTVMNAALEAGADDVVTYDDGAIDVFTPWETFGDVKDALDAAGLKAESAEVSMIPSTKADMDAETAPKLMRLIDMLEDCDDVQEVYHNGEISDEVAELL.

The protein belongs to the TACO1 family.

The protein localises to the cytoplasm. The protein is Probable transcriptional regulatory protein ECA2494 of Pectobacterium atrosepticum (strain SCRI 1043 / ATCC BAA-672) (Erwinia carotovora subsp. atroseptica).